A 271-amino-acid polypeptide reads, in one-letter code: Inactive phospholipid phosphatase 7 (271 aa).

The disordered stretch occupies residues 1 to 66 (MPASQSRARA…RERRQSQQLP (66 aa)). Residues 1–112 (MPASQSRARA…AASWASARSM (112 aa)) lie on the Cytoplasmic side of the membrane. Phosphoserine occurs at positions 43 and 62. The segment at 70-91 (CMQLNPSFKGIAFNSLLAIDIC) is interaction with MTOR. The helical transmembrane segment at 113–133 (VKLIGITGHGIPWIGGTILCL) threads the bilayer. Over 134–141 (VKSSTLAG) the chain is Extracellular. A helical transmembrane segment spans residues 142 to 162 (QEVLMNLLLALLLDIMTVAGV). The Cytoplasmic segment spans residues 163–202 (QKLIKRRGPYETSPSLLDYLTMDIYAFPAGHASRAAMVSK). Residues 203–223 (FFLSHLVLAVPLRVLLVLWAL) form a helical membrane-spanning segment. The Extracellular segment spans residues 224–239 (CVGLSRVMIGRHHVTD). A helical transmembrane segment spans residues 240-260 (VLSGFVIGYLQFRLVELVWMP). At 261–271 (SSTCQMLISAW) the chain is on the cytoplasmic side.

It belongs to the PA-phosphatase related phosphoesterase family. In terms of assembly, homo and heterooligomer. Interacts with MTOR; controls MTOR-dependent IGF2 expression during myoblast differentiation.

It is found in the nucleus envelope. Its subcellular location is the endoplasmic reticulum membrane. The protein localises to the membrane. Functionally, plays a role as negative regulator of myoblast differentiation, in part through effects on MTOR signaling. Has no detectable enzymatic activity. The protein is Inactive phospholipid phosphatase 7 of Homo sapiens (Human).